We begin with the raw amino-acid sequence, 313 residues long: D-alanine--D-alanine ligase (313 aa).

Residues 108-308 (KLVWQQTGVP…YSELVVKVLA (201 aa)) form the ATP-grasp domain. 138-193 (VAKLGLPLFVKPASEGSSVAVLKVKTADALPAALSEAATHDKIVIVEKSIEGGGEY) provides a ligand contact to ATP. Positions 262, 275, and 277 each coordinate Mg(2+).

It belongs to the D-alanine--D-alanine ligase family. Requires Mg(2+) as cofactor. Mn(2+) serves as cofactor.

The protein localises to the cytoplasm. It catalyses the reaction 2 D-alanine + ATP = D-alanyl-D-alanine + ADP + phosphate + H(+). It functions in the pathway cell wall biogenesis; peptidoglycan biosynthesis. Functionally, cell wall formation. This chain is D-alanine--D-alanine ligase, found in Burkholderia ambifaria (strain ATCC BAA-244 / DSM 16087 / CCUG 44356 / LMG 19182 / AMMD) (Burkholderia cepacia (strain AMMD)).